The following is a 338-amino-acid chain: Tryptophan--tRNA ligase (338 aa).

Residues 18-20 (QPS) and 26-27 (GN) contribute to the ATP site. The 'HIGH' region motif lies at 19-27 (PSGNLTIGN). Position 142 (aspartate 142) interacts with L-tryptophan. ATP-binding positions include 154–156 (GND), isoleucine 193, and 202–206 (KMSKS). Residues 202–206 (KMSKS) carry the 'KMSKS' region motif.

This sequence belongs to the class-I aminoacyl-tRNA synthetase family. Homodimer.

It is found in the cytoplasm. It catalyses the reaction tRNA(Trp) + L-tryptophan + ATP = L-tryptophyl-tRNA(Trp) + AMP + diphosphate + H(+). Its function is as follows. Catalyzes the attachment of tryptophan to tRNA(Trp). The protein is Tryptophan--tRNA ligase of Clostridium tetani (strain Massachusetts / E88).